Reading from the N-terminus, the 91-residue chain is Small ribosomal subunit protein bS16 (91 aa).

It belongs to the bacterial ribosomal protein bS16 family.

This is Small ribosomal subunit protein bS16 from Exiguobacterium sibiricum (strain DSM 17290 / CCUG 55495 / CIP 109462 / JCM 13490 / 255-15).